We begin with the raw amino-acid sequence, 95 residues long: PIK3R3 upstream open reading frame protein (95 aa).

The disordered stretch occupies residues 1-27 (MGPSRLVRGPRPQGMRSPYRRPGMGWP).

The protein is PIK3R3 upstream open reading frame protein of Homo sapiens (Human).